The chain runs to 460 residues: tRNA (guanine(10)-N(2))-methyltransferase TRMT11 (460 aa).

Ala2 carries the post-translational modification N-acetylalanine.

It belongs to the class I-like SAM-binding methyltransferase superfamily. TRM11 methyltransferase family. As to quaternary structure, part of the heterodimeric TRMT11-TRM112 methyltransferase complex; this complex forms an active tRNA methyltransferase, where TRMT112 acts as an activator of the catalytic subunit TRMT11.

The protein localises to the cytoplasm. The enzyme catalyses guanosine(10) in tRNA + S-adenosyl-L-methionine = N(2)-methylguanosine(10) in tRNA + S-adenosyl-L-homocysteine + H(+). Its function is as follows. Catalytic subunit of the TRMT11-TRM112 methyltransferase complex, that specifically mediates the S-adenosyl-L-methionine-dependent N(2)-methylation of guanosine nucleotide at position 10 (m2G10) in tRNAs. This is one of the major tRNA (guanine-N(2))-methyltransferases. This chain is tRNA (guanine(10)-N(2))-methyltransferase TRMT11, found in Bos taurus (Bovine).